A 292-amino-acid polypeptide reads, in one-letter code: MKRIFLFIVTNLAILVMLSITLRLLGVDRILDAEGSGLNFNALLVLSAVIGFGGSLISLAMSKWSAKHMTGATVIEIPSNSTEGWLVETVRRQAKAAGVGMPEVAIYDSPDINAFATGMNRNNALVAVSSGLLQKMSRDEAEAVLAHEVSHIANGDMVTLALIQGVVNTFVIFLSRIIGHVIDRAVFRTEEGHGPAYFVTSLVAQLVLGILATIIVMWFSRQREFRADAGSAQLSGRNKMVAALRRLQQEYEPSHLPDKIAAFGISGQKSQIGRLFMSHPPLEERIQALQSA.

2 helical membrane passes run 4–24 and 42–62; these read IFLFIVTNLAILVMLSITLRL and ALLVLSAVIGFGGSLISLAMS. Residue His147 coordinates Zn(2+). The active site involves Glu148. His151 serves as a coordination point for Zn(2+). Helical transmembrane passes span 158-178 and 198-218; these read VTLALIQGVVNTFVIFLSRII and FVTSLVAQLVLGILATIIVMW. Position 224 (Glu224) interacts with Zn(2+).

Belongs to the peptidase M48B family. Zn(2+) serves as cofactor.

The protein resides in the cell inner membrane. This is Protease HtpX homolog from Nitrosomonas eutropha (strain DSM 101675 / C91 / Nm57).